We begin with the raw amino-acid sequence, 128 residues long: Fluoride-specific ion channel FluC (128 aa).

4 helical membrane-spanning segments follow: residues 7-27, 37-57, 73-93, and 96-116; these read LAIG…AGLV, FGTL…IGAI, TGMM…FFLF, and ALYI…IILA. Na(+) is bound by residues Gly-77 and Thr-80.

Belongs to the fluoride channel Fluc/FEX (TC 1.A.43) family.

It localises to the cell inner membrane. It catalyses the reaction fluoride(in) = fluoride(out). Na(+) is not transported, but it plays an essential structural role and its presence is essential for fluoride channel function. Its function is as follows. Fluoride-specific ion channel. Important for reducing fluoride concentration in the cell, thus reducing its toxicity. This is Fluoride-specific ion channel FluC from Nautilia profundicola (strain ATCC BAA-1463 / DSM 18972 / AmH).